Reading from the N-terminus, the 116-residue chain is Venom nerve growth factor (116 aa).

Disulfide bonds link cysteine 14–cysteine 78, cysteine 56–cysteine 106, and cysteine 66–cysteine 108.

This sequence belongs to the NGF-beta family. In terms of assembly, homodimer; non-covalently linked. Not glycosylated. In terms of tissue distribution, expressed by the venom gland.

It is found in the secreted. Its function is as follows. Nerve growth factor is important for the development and maintenance of the sympathetic and sensory nervous systems. It stimulates division and differentiation of sympathetic and embryonic sensory neurons as well as basal forebrain cholinergic neurons in the brain. Its relevance in the snake venom is not clear. However, it has been shown to inhibit metalloproteinase-dependent proteolysis of platelet glycoprotein Ib alpha, suggesting a metalloproteinase inhibition to prevent metalloprotease autodigestion and/or protection against prey proteases. Binds a lipid between the two protein chains in the homodimer. The lipid-bound form promotes histamine relase from mouse mast cells, contrary to the lipid-free form. This chain is Venom nerve growth factor, found in Naja naja (Indian cobra).